The chain runs to 730 residues: Stonin-1 (730 aa).

3 disordered regions span residues 1–26, 38–83, and 132–159; these read MYST…KRKD, NGLK…PLST, and SPHV…AGPQ. Low complexity-rich tracts occupy residues 54-65 and 132-143; these read PSSASSTPLSSP and SPHVSLPSSHSH. Residues 269 to 402 form the SHD domain; the sequence is GWSFMLRIPE…KLPATAKPKN (134 aa). In terms of domain architecture, MHD spans 407-710; that stretch reads EQEICLDIQD…ACYNIQVEIE (304 aa).

The protein belongs to the Stoned B family.

The protein resides in the cytoplasm. It localises to the membrane. Its function is as follows. May be involved in the endocytic machinery. This chain is Stonin-1 (Ston1), found in Mus musculus (Mouse).